The primary structure comprises 193 residues: DNA damage-inducible transcript 4-like protein (193 aa).

This sequence belongs to the DDIT4 family.

It is found in the cytoplasm. Its function is as follows. Inhibits cell growth by regulating the TOR signaling pathway upstream of the TSC1-TSC2 complex and downstream of AKT1. The polypeptide is DNA damage-inducible transcript 4-like protein (Ddit4l) (Mus musculus (Mouse)).